Reading from the N-terminus, the 345-residue chain is L-Ala-D/L-Glu epimerase (345 aa).

The substrate site is built by T134 and K159. K161 acts as the Proton acceptor; specific for (R)-substrate epimerization in catalysis. Position 188 (D188) interacts with Mg(2+). N190 contacts substrate. Positions 216 and 241 each coordinate Mg(2+). K265 (proton acceptor; specific for (S)-substrate epimerization) is an active-site residue. Substrate is bound by residues C292, D317, and D319.

Belongs to the mandelate racemase/muconate lactonizing enzyme family. Mg(2+) serves as cofactor.

It catalyses the reaction L-alanyl-L-glutamate = L-alanyl-D-glutamate. It functions in the pathway cell wall degradation; peptidoglycan degradation. Functionally, catalyzes the epimerization of L-Ala-D-Glu to L-Ala-L-Glu and has probably a role in the metabolism of the murein peptide, of which L-Ala-D-Glu is a component. Is also able to catalyze the reverse reaction and the epimerization of a broad range of other dipeptides; is most efficient with L-Ala-D/L-Phe, L-Ala-D/L-Tyr, and L-Ala-D/L-His. The chain is L-Ala-D/L-Glu epimerase from Thermotoga maritima (strain ATCC 43589 / DSM 3109 / JCM 10099 / NBRC 100826 / MSB8).